Here is a 215-residue protein sequence, read N- to C-terminus: Probable maleylacetoacetate isomerase (215 aa).

The region spanning 2–85 (MSLILYGYWR…YLDETYPAPR (84 aa)) is the GST N-terminal domain. Residues 90–215 (RGAERYQVKA…AAPENQPDAC (126 aa)) form the GST C-terminal domain.

This sequence belongs to the GST superfamily. Zeta family.

The enzyme catalyses 4-maleylacetoacetate = 4-fumarylacetoacetate. The protein operates within amino-acid degradation; L-phenylalanine degradation; acetoacetate and fumarate from L-phenylalanine: step 5/6. In Vibrio cholerae serotype O1 (strain ATCC 39315 / El Tor Inaba N16961), this protein is Probable maleylacetoacetate isomerase (maiA).